Reading from the N-terminus, the 132-residue chain is Small ribosomal subunit protein uS8 (132 aa).

Belongs to the universal ribosomal protein uS8 family. As to quaternary structure, part of the 30S ribosomal subunit. Contacts proteins S5 and S12.

Functionally, one of the primary rRNA binding proteins, it binds directly to 16S rRNA central domain where it helps coordinate assembly of the platform of the 30S subunit. In Anaeromyxobacter dehalogenans (strain 2CP-C), this protein is Small ribosomal subunit protein uS8.